The following is a 193-amino-acid chain: Endoribonuclease YbeY (193 aa).

Zn(2+) contacts are provided by H109, H113, and H119. Residues 143–193 form a disordered region; the sequence is GAALREGRREGRAGEAKDRWTRSPTSISTPSRSGSTARGSRAKTSRAGSRT. Residues 147–163 show a composition bias toward basic and acidic residues; it reads REGRREGRAGEAKDRWT. Residues 164 to 181 show a composition bias toward low complexity; the sequence is RSPTSISTPSRSGSTARG.

The protein belongs to the endoribonuclease YbeY family. It depends on Zn(2+) as a cofactor.

Its subcellular location is the cytoplasm. Its function is as follows. Single strand-specific metallo-endoribonuclease involved in late-stage 70S ribosome quality control and in maturation of the 3' terminus of the 16S rRNA. The polypeptide is Endoribonuclease YbeY (Anaeromyxobacter dehalogenans (strain 2CP-C)).